The sequence spans 82 residues: Modifier of protein aggregation 4 (82 aa).

Over residues 1 to 23 (MTRGNQRDLAREKNQKKLADQKK) the composition is skewed to basic and acidic residues. Disordered stretches follow at residues 1 to 41 (MTRG…MDAR) and 63 to 82 (EAAA…PLKM).

The protein belongs to the SERF family.

The protein localises to the cytoplasm. The protein resides in the cytosol. It is found in the nucleus. Functionally, positive regulator of protein aggregation and age-related proteotoxicity. Induces conformational changes in aggregation-prone proteins, driving them into compact formations preceding the formation of aggregates. The polypeptide is Modifier of protein aggregation 4 (Caenorhabditis elegans).